The following is a 281-amino-acid chain: Glyceraldehyde dehydrogenase medium chain (281 aa).

The FAD-binding PCMH-type domain maps to Met-1–Gly-176. Residues Ala-31 to Ser-35 and Thr-110 to Ala-114 each bind FAD.

As to quaternary structure, heterotrimer composed of a large chain (CutA), a medium chain (CutB) and a small chain (CutC). Requires FAD as cofactor.

The protein resides in the cytoplasm. The catalysed reaction is D-glyceraldehyde + A + H2O = (R)-glycerate + AH2 + H(+). Its function is as follows. Component of the glyceraldehyde dehydrogenase which is involved the nonphosphorylated Entner-Doudoroff pathway. Catalyzes the oxidation of D-glyceraldehyde to yield glycerate. When the artificial electron acceptor 2,6-dichlorophenol-indophenol (Cl2Ind) is used, the enzyme shows a broad substrate range (glyceraldehyde-3-phosphate, formaldehyde, acetaldehyde, propionaldehyde and isobutyraldehyde), but is most active with D-glyceraldehyde. It is not known which acceptor is utilized in vivo. This is Glyceraldehyde dehydrogenase medium chain (cutB) from Sulfolobus acidocaldarius (strain ATCC 33909 / DSM 639 / JCM 8929 / NBRC 15157 / NCIMB 11770).